The sequence spans 453 residues: Ribosomal protein uS12 methylthiotransferase RimO (453 aa).

The 116-residue stretch at 5-120 (PKVGFVSLGC…VMQAVHSHLP (116 aa)) folds into the MTTase N-terminal domain. The [4Fe-4S] cluster site is built by Cys-14, Cys-50, Cys-79, Cys-151, Cys-155, and Cys-158. A Radical SAM core domain is found at 137 to 382 (LTPRHYAYLK…MEVAEEVSAN (246 aa)). Residues 385–453 (QRKVGKTLKV…ADGHDLWGEV (69 aa)) form the TRAM domain.

It belongs to the methylthiotransferase family. RimO subfamily. [4Fe-4S] cluster is required as a cofactor.

The protein localises to the cytoplasm. It carries out the reaction L-aspartate(89)-[ribosomal protein uS12]-hydrogen + (sulfur carrier)-SH + AH2 + 2 S-adenosyl-L-methionine = 3-methylsulfanyl-L-aspartate(89)-[ribosomal protein uS12]-hydrogen + (sulfur carrier)-H + 5'-deoxyadenosine + L-methionine + A + S-adenosyl-L-homocysteine + 2 H(+). Its function is as follows. Catalyzes the methylthiolation of an aspartic acid residue of ribosomal protein uS12. The chain is Ribosomal protein uS12 methylthiotransferase RimO from Burkholderia cenocepacia (strain HI2424).